We begin with the raw amino-acid sequence, 260 residues long: Snake venom serine protease 2B (260 aa).

A signal peptide spans 1-18 (MVLIRVLANLLILQLSYA). Residues 19-24 (QKSSEL) constitute a propeptide that is removed on maturation. Residues 25–251 (VVGGDECNIN…HLDWIQSIIA (227 aa)) form the Peptidase S1 domain. Disulfide bonds link cysteine 31–cysteine 165, cysteine 52–cysteine 68, cysteine 102–cysteine 258, cysteine 144–cysteine 212, cysteine 176–cysteine 191, and cysteine 202–cysteine 227. The Charge relay system role is filled by histidine 67. N-linked (GlcNAc...) asparagine glycosylation is found at asparagine 101 and asparagine 105. Catalysis depends on aspartate 112, which acts as the Charge relay system. Asparagine 123 and asparagine 156 each carry an N-linked (GlcNAc...) asparagine glycan. The active-site Charge relay system is the serine 206.

It belongs to the peptidase S1 family. Snake venom subfamily. As to quaternary structure, monomer. As to expression, expressed by the venom gland.

The protein localises to the secreted. Functionally, snake venom serine protease that may act in the hemostasis system of the prey. The sequence is that of Snake venom serine protease 2B (TLG2B) from Craspedocephalus gramineus (Bamboo pit viper).